The chain runs to 341 residues: Very-long-chain 3-oxoacyl-CoA reductase (341 aa).

A helical membrane pass occupies residues 15–35; sequence VVTAFSVIGIVFTILKFTSFA. Residues V61, D115, N142, K177, Y216, K220, V249, and S251 each coordinate NADP(+). The active-site Proton donor is Y216. K220 (lowers pKa of active site Tyr) is an active-site residue.

Belongs to the short-chain dehydrogenases/reductases (SDR) family.

It localises to the endoplasmic reticulum membrane. The enzyme catalyses a very-long-chain (3R)-3-hydroxyacyl-CoA + NADP(+) = a very-long-chain 3-oxoacyl-CoA + NADPH + H(+). It functions in the pathway lipid metabolism; fatty acid biosynthesis. In terms of biological role, component of the microsomal membrane bound fatty acid elongation system, which produces the 26-carbon very long-chain fatty acids (VLCFA) from palmitate. Catalyzes the reduction of the 3-ketoacyl-CoA intermediate that is formed in each cycle of fatty acid elongation. VLCFAs serve as precursors for ceramide and sphingolipids. This Schizosaccharomyces pombe (strain 972 / ATCC 24843) (Fission yeast) protein is Very-long-chain 3-oxoacyl-CoA reductase.